Here is a 421-residue protein sequence, read N- to C-terminus: Histidine--tRNA ligase (421 aa).

Belongs to the class-II aminoacyl-tRNA synthetase family. In terms of assembly, homodimer.

Its subcellular location is the cytoplasm. The catalysed reaction is tRNA(His) + L-histidine + ATP = L-histidyl-tRNA(His) + AMP + diphosphate + H(+). In Ureaplasma urealyticum serovar 10 (strain ATCC 33699 / Western), this protein is Histidine--tRNA ligase.